A 222-amino-acid polypeptide reads, in one-letter code: Small ribosomal subunit protein uS7m (222 aa).

It belongs to the universal ribosomal protein uS7 family. In terms of assembly, part of the small ribosomal subunit.

It is found in the mitochondrion. One of the primary rRNA binding proteins, it binds directly to 18S rRNA where it nucleates assembly of the head domain of the small subunit. The protein is Small ribosomal subunit protein uS7m (RPS7) of Prototheca wickerhamii.